The following is a 951-amino-acid chain: Valine--tRNA ligase (951 aa).

The short motif at 42–52 (PNVTGSLHMGH) is the 'HIGH' region element. A 'KMSKS' region motif is present at residues 554–558 (KMSKS). K557 contacts ATP. A coiled-coil region spans residues 880–944 (AGLINKEDEL…AEAKAKLIEQ (65 aa)).

It belongs to the class-I aminoacyl-tRNA synthetase family. ValS type 1 subfamily. Monomer.

The protein resides in the cytoplasm. The catalysed reaction is tRNA(Val) + L-valine + ATP = L-valyl-tRNA(Val) + AMP + diphosphate. Its function is as follows. Catalyzes the attachment of valine to tRNA(Val). As ValRS can inadvertently accommodate and process structurally similar amino acids such as threonine, to avoid such errors, it has a 'posttransfer' editing activity that hydrolyzes mischarged Thr-tRNA(Val) in a tRNA-dependent manner. In Shigella boydii serotype 4 (strain Sb227), this protein is Valine--tRNA ligase.